The following is a 77-amino-acid chain: Conotoxin ArMKLT2-0322 (77 aa).

Residues 1–22 (MKLTCVLIIAVLFLIVCQLNTA) form the signal peptide. Residues 23-47 (DDSRDKQEYRAVRLRDAIRNSRGSR) constitute a propeptide that is removed on maturation. 3 disulfide bridges follow: Cys49–Cys62, Cys56–Cys67, and Cys61–Cys74.

This sequence belongs to the conotoxin O1 superfamily. Expressed by the venom duct.

The protein localises to the secreted. The protein is Conotoxin ArMKLT2-0322 of Conus arenatus (Sand-dusted cone).